The primary structure comprises 120 residues: Cell division protein FtsL (120 aa).

Positions 1 to 22 are disordered; sequence MSNVAYKSNLEPNRVHREAEQP. Topologically, residues 1–37 are cytoplasmic; it reads MSNVAYKSNLEPNRVHREAEQPKKQILKRGQMTLGEK. Over residues 13 to 22 the composition is skewed to basic and acidic residues; it reads NRVHREAEQP. Residues 38-58 traverse the membrane as a helical segment; it reads VIITIALAIVLVVAFRIISVQ. Residues 59–120 lie on the Extracellular side of the membrane; it reads AQIYTVNQEI…GDNVKVVDGQ (62 aa).

The protein belongs to the FtsL family.

It localises to the cell membrane. Functionally, essential cell division protein. This is Cell division protein FtsL from Listeria monocytogenes serovar 1/2a (strain ATCC BAA-679 / EGD-e).